We begin with the raw amino-acid sequence, 742 residues long: Collectin-12 (742 aa).

The Cytoplasmic portion of the chain corresponds to 1–37 (MKDDFAEEEEVQSFGYKRFGIQEGTQCTKCKNNWALK). The chain crosses the membrane as a helical; Signal-anchor for type II membrane protein span at residues 38-58 (FSIILLYILCALLTITVAILG). Residues 59–742 (YKVVEKMDNV…DRETVLSSAL (684 aa)) lie on the Extracellular side of the membrane. Residue Asn67 is glycosylated (N-linked (GlcNAc...) asparagine). The stretch at 73–141 (ETSRQTYDDK…NKDTLEKLQA (69 aa)) forms a coiled coil. N-linked (GlcNAc...) asparagine glycosylation is found at Asn159, Asn168, and Asn271. The stretch at 215–328 (QQRNLITNLQ…KDAENRTAIK (114 aa)) forms a coiled coil. The segment at 439–608 (TILQGPPGPR…TPAPEDNGCP (170 aa)) is disordered. Collagen-like domains lie at 443-472 (GPPGPRGPRGDRGSQGPPGPTGNKGQKGEK), 473-529 (GEPG…PGPP), and 530-589 (GPPG…SGAV). Composition is skewed to low complexity over residues 502–525 (KGSQGPKGSRGSPGKPGPQGSSGD) and 534–556 (KEGLPGPQGPPGFQGLQGTVGEP). Residues 571 to 585 (PGMPGPKGPPGPPGP) are compositionally biased toward pro residues. Disulfide bonds link Cys607/Cys618, Cys635/Cys730, and Cys708/Cys722. A C-type lectin domain is found at 614–731 (FTDKCYYFSV…CEDVNNFICE (118 aa)). Ca(2+) is bound by residues Phe644, Asn646, Glu650, Asp670, and Glu674. Residues Lys691, Gln694, and Asp696 each coordinate a carbohydrate. Ca(2+) is bound by residues Gln694, Asp696, Asn697, Glu706, Asp707, Asn718, Asp719, and Glu731. Glu706 contacts a carbohydrate. 2 residues coordinate a carbohydrate: Asn718 and Asp719.

In terms of assembly, the extracellular domain forms a stable trimer. The extracellular domain interacts with fibrillar amyloid-beta peptide. As to expression, expressed in perivascular macrophages. Expressed in plaques-surrounding reactive astrocytes and in perivascular astrocytes associated with cerebral amyloid angiopathy (CAA) in the temporal cortex of Alzheimer patient (at protein level). Strongly expressed in placenta. Moderately expressed in heart, skeletal muscle, small intestine and lung. Weakly expressed in brain, colon, thymus and kidney. Expressed in nurse-like cells. Expressed in reactive astrocytes and vascular/perivascular cells in the brain of Alzheimer patient.

It localises to the membrane. Its function is as follows. Scavenger receptor that displays several functions associated with host defense. Promotes binding and phagocytosis of Gram-positive, Gram-negative bacteria and yeast. Mediates the recognition, internalization and degradation of oxidatively modified low density lipoprotein (oxLDL) by vascular endothelial cells. Binds to several carbohydrates including Gal-type ligands, D-galactose, L- and D-fucose, GalNAc, T and Tn antigens in a calcium-dependent manner and internalizes specifically GalNAc in nurse-like cells. Also binds to sialyl Lewis X or a trisaccharide and asialo-orosomucoid (ASOR). May also play a role in the clearance of amyloid-beta in Alzheimer disease. This chain is Collectin-12 (COLEC12), found in Homo sapiens (Human).